The primary structure comprises 173 residues: NADH-ubiquinone oxidoreductase chain 6 (173 aa).

5 helical membrane passes run 1-21 (MAYI…SVAS), 25-45 (PYFA…VLMG), 53-73 (LVLF…CAAL), 87-107 (VLGS…WFWG), and 139-159 (LGGG…LVVL).

Belongs to the complex I subunit 6 family.

It is found in the mitochondrion membrane. It carries out the reaction a ubiquinone + NADH + 5 H(+)(in) = a ubiquinol + NAD(+) + 4 H(+)(out). In terms of biological role, core subunit of the mitochondrial membrane respiratory chain NADH dehydrogenase (Complex I) that is believed to belong to the minimal assembly required for catalysis. Complex I functions in the transfer of electrons from NADH to the respiratory chain. The immediate electron acceptor for the enzyme is believed to be ubiquinone. This chain is NADH-ubiquinone oxidoreductase chain 6 (MT-ND6), found in Gadus morhua (Atlantic cod).